The sequence spans 98 residues: MGAMSPWHWAIVALVVVILFGSKKLPDAARGLGRSLRIFKSEVKEMQNDNSTPAPTAQSAPPPQSAPAELPVADTTTAPVTPPAPVQPQSQHTEPKSA.

A helical transmembrane segment spans residues 1–21 (MGAMSPWHWAIVALVVVILFG). The tract at residues 43 to 98 (VKEMQNDNSTPAPTAQSAPPPQSAPAELPVADTTTAPVTPPAPVQPQSQHTEPKSA) is disordered. A compositionally biased stretch (low complexity) spans 66 to 79 (APAELPVADTTTAP).

It belongs to the TatA/E family. In terms of assembly, the Tat system comprises two distinct complexes: a TatABC complex, containing multiple copies of TatA, TatB and TatC subunits, and a separate TatA complex, containing only TatA subunits. Substrates initially bind to the TatABC complex, which probably triggers association of the separate TatA complex to form the active translocon.

It localises to the cell membrane. Part of the twin-arginine translocation (Tat) system that transports large folded proteins containing a characteristic twin-arginine motif in their signal peptide across membranes. TatA could form the protein-conducting channel of the Tat system. The polypeptide is Sec-independent protein translocase protein TatA (Rhodococcus erythropolis (Arthrobacter picolinophilus)).